The sequence spans 74 residues: Exodeoxyribonuclease 7 small subunit (74 aa).

This sequence belongs to the XseB family. In terms of assembly, heterooligomer composed of large and small subunits.

It localises to the cytoplasm. The catalysed reaction is Exonucleolytic cleavage in either 5'- to 3'- or 3'- to 5'-direction to yield nucleoside 5'-phosphates.. In terms of biological role, bidirectionally degrades single-stranded DNA into large acid-insoluble oligonucleotides, which are then degraded further into small acid-soluble oligonucleotides. The protein is Exodeoxyribonuclease 7 small subunit of Bdellovibrio bacteriovorus (strain ATCC 15356 / DSM 50701 / NCIMB 9529 / HD100).